A 65-amino-acid polypeptide reads, in one-letter code: Large ribosomal subunit protein bL35 (65 aa).

Disordered regions lie at residues Met-1 to Lys-23 and Met-36 to Ala-65. Polar residues predominate over residues Asp-54–Ala-65.

Belongs to the bacterial ribosomal protein bL35 family.

This is Large ribosomal subunit protein bL35 from Francisella tularensis subsp. tularensis (strain FSC 198).